The primary structure comprises 234 residues: 7-cyano-7-deazaguanine synthase (234 aa).

An ATP-binding site is contributed by 15–25 (LSGGLDSSTCL). 4 residues coordinate Zn(2+): Cys199, Cys208, Cys211, and Cys214.

Belongs to the QueC family. Zn(2+) serves as cofactor.

It carries out the reaction 7-carboxy-7-deazaguanine + NH4(+) + ATP = 7-cyano-7-deazaguanine + ADP + phosphate + H2O + H(+). It functions in the pathway purine metabolism; 7-cyano-7-deazaguanine biosynthesis. Functionally, catalyzes the ATP-dependent conversion of 7-carboxy-7-deazaguanine (CDG) to 7-cyano-7-deazaguanine (preQ(0)). This is 7-cyano-7-deazaguanine synthase from Anaeromyxobacter dehalogenans (strain 2CP-C).